A 644-amino-acid polypeptide reads, in one-letter code: Threonine--tRNA ligase (644 aa).

The 61-residue stretch at Met-1 to Tyr-61 folds into the TGS domain. Residues Asp-241–Pro-532 are catalytic. Residues Cys-333, His-384, and His-509 each contribute to the Zn(2+) site.

Belongs to the class-II aminoacyl-tRNA synthetase family. Homodimer. Requires Zn(2+) as cofactor.

The protein localises to the cytoplasm. It catalyses the reaction tRNA(Thr) + L-threonine + ATP = L-threonyl-tRNA(Thr) + AMP + diphosphate + H(+). Its function is as follows. Catalyzes the attachment of threonine to tRNA(Thr) in a two-step reaction: L-threonine is first activated by ATP to form Thr-AMP and then transferred to the acceptor end of tRNA(Thr). Also edits incorrectly charged L-seryl-tRNA(Thr). This is Threonine--tRNA ligase from Oleidesulfovibrio alaskensis (strain ATCC BAA-1058 / DSM 17464 / G20) (Desulfovibrio alaskensis).